The sequence spans 568 residues: TNF receptor-associated factor 3 (568 aa).

Residues M1 to G28 form a disordered region. Position 9 is a phosphoserine (S9). C56 participates in a covalent cross-link: Glycyl cysteine thioester (Cys-Gly) (interchain with G-Cter in ubiquitin). The RING-type zinc finger occupies C68–M77. A Glycyl cysteine thioester (Cys-Gly) (interchain with G-Cter in ubiquitin) cross-link involves residue C124. TRAF-type zinc fingers lie at residues V135–Q190 and K191–K249. A Glycyl lysine isopeptide (Lys-Gly) (interchain with G-Cter in ubiquitin) cross-link involves residue K168. A coiled-coil region spans residues S267–R338. A Glycyl lysine isopeptide (Lys-Gly) (interchain with G-Cter in ubiquitin) cross-link involves residue K329. Residues L392–N415 are (Microbial infection) Interaction with glycoprotein N of Andes and New York hantaviruses. The MATH domain occupies N415 to V560.

It belongs to the TNF receptor-associated factor family. A subfamily. In terms of assembly, homotrimer. Heterotrimer with TRAF2 and TRAF5. Interacts with LTBR/TNFRSF3, TNFRSF4, TNFRSF5/CD40, TNFRSF8/CD30, TNFRSF13C TNFRSF17/BCMA, TLR4 and EDAR. Interacts with MAP3K5, MAP3K14, TRAIP/TRIP, TDP2/TTRAP, TANK/ITRAF and TRAF3IP1. Interaction with TNFRSF5/CD40 is modulated by TANK/ITRAF, which competes for the same binding site. Interacts with TICAM1. Interacts with TRAFD1. Interacts with OTUB1, OTUB2 and OTUD5. Interacts with RNF216, OPTN and TBK1. Identified in a complex with TRAF2, MAP3K14 and BIRC3. Interacts with BIRC2 and BIRC3. Upon exposure to bacterial lipopolysaccharide (LPS), recruited to a transient complex containing TLR4, TRAF3, TRAF6, IKBKG, MAP3K7, MYD88, TICAM1, BIRC2, BIRC3 and UBE2N. Interacts (via RING-type zinc finger domain) with SRC. Interacts with CARD14. Interacts (via MATH domain) with PTPN22; the interaction promotes TRAF3 polyubiquitination. Interacts with MAVS. Directly interacts with DDX3X; this interaction stimulates TRAF3 'Lys-63' ubiquitination. Interacts with IRF3. Interacts with IKBKE in the course of Sendai virus infection. Interacts with TRIM35. Interacts with GAPDH; promoting TRAF3 ubiquitination. Interacts with PPP3CA and PPP3CB. Interacts with ATP1B1; promoting TRAF3 ubiquitination. Interacts with RALGDS. Interacts with FBXO11. As to quaternary structure, (Microbial infection) Interacts (via N-terminus) with New York hantavirus glycoprotein N (via C-terminus); this interaction inhibits the formation of TRAF3-TBK1 complexes. (Microbial infection) Interacts with Andes hantavirus glycoprotein N (via C-terminus); this interaction inhibits the formation of TRAF3-TBK1 complexes. In terms of assembly, (Microbial infection) Interacts with Tula hantavirus glycoprotein N (via C-terminus); this interaction inhibits the formation of TRAF3-TBK1 complexes. As to quaternary structure, (Microbial infection) Interacts with Epstein-Barr virus protein LMP1. Undergoes 'Lys-48'-linked polyubiquitination, leading to its proteasomal degradation in response to signaling by TNFSF13B, TLR4 or through CD40. 'Lys-48'-linked polyubiquitinated form is deubiquitinated by OTUD7B, preventing TRAF3 proteolysis and over-activation of non-canonical NF-kappa-B. Undergoes 'Lys-63'-linked ubiquitination during early stages of virus infection, and 'Lys-48'-linked ubiquitination during later stages. Undergoes both 'Lys-48'-linked and 'Lys-63'-linked ubiquitination in response to TLR3 and TLR4 signaling. 'Lys-63'-linked ubiquitination can be mediated by TRIM35. Deubiquitinated by OTUB1, OTUB2 and OTUD5. Undergoes 'Lys-63'-linked deubiquitination by MYSM1 to terminate the pattern-recognition receptors/PRRs pathways. Also undergoes 'Lys-29'-linked ubiquitination on Cys-56 and Cys-124 by NEDD4L; leading to increased 'Lys-48'- and 'Lys-63'-linked ubiquitination as well as increased binding to TBK1. TLR4 signals emanating from bacteria containing vesicles trigger 'Lys-33'-linked polyubiquitination that promotes the assembly of the exocyst complex thereby connecting innate immune signaling to the cellular trafficking apparatus. Deubiquitinated by USP25 during viral infection, leading to TRAF3 stabilization and type I interferon production. Ubiquitinated at Lys-329 by the SCF(FBXL2) complex, leading to its degradation by the proteasome. 'Lys-63'-linked ubiquitination by FBXO11 in a NEDD8-dependent manner promotes the amplification of IFN-I signaling. In terms of processing, (Microbial infection) Cleaved by enterovirus D68 protease 2A; leading to inhibition of NF-kappa-B or IFN-beta triggered by TRAF3.

The protein resides in the cytoplasm. It localises to the endosome. The protein localises to the mitochondrion. The enzyme catalyses S-ubiquitinyl-[E2 ubiquitin-conjugating enzyme]-L-cysteine + [acceptor protein]-L-lysine = [E2 ubiquitin-conjugating enzyme]-L-cysteine + N(6)-ubiquitinyl-[acceptor protein]-L-lysine.. Cytoplasmic E3 ubiquitin ligase that regulates various signaling pathways, such as the NF-kappa-B, mitogen-activated protein kinase (MAPK) and interferon regulatory factor (IRF) pathways, and thus controls a lot of biological processes in both immune and non-immune cell types. In TLR and RLR signaling pathways, acts as an E3 ubiquitin ligase promoting the synthesis of 'Lys-63'-linked polyubiquitin chains on several substrates such as ASC that lead to the activation of the type I interferon response or the inflammasome. Following the activation of certain TLRs such as TLR4, acts as a negative NF-kappa-B regulator, possibly to avoid unregulated inflammatory response, and its degradation via 'Lys-48'-linked polyubiquitination is required for MAPK activation and production of inflammatory cytokines. Alternatively, when TLR4 orchestrates bacterial expulsion, TRAF3 undergoes 'Lys-33'-linked polyubiquitination and subsequently binds to RALGDS, mobilizing the exocyst complex to rapidly expel intracellular bacteria back for clearance. Also acts as a constitutive negative regulator of the alternative NF-kappa-B pathway, which controls B-cell survival and lymphoid organ development. Required for normal antibody isotype switching from IgM to IgG. Plays a role T-cell dependent immune responses. Down-regulates proteolytic processing of NFKB2, and thereby inhibits non-canonical activation of NF-kappa-B. Promotes ubiquitination and proteasomal degradation of MAP3K14. The polypeptide is TNF receptor-associated factor 3 (Homo sapiens (Human)).